The primary structure comprises 141 residues: Small ribosomal subunit protein bS6 (141 aa).

The tract at residues 96–141 (VTGPSEMLKAEENRSERRERRERPEHADGAEGDDSNDSDNSDNADE) is disordered. Basic and acidic residues predominate over residues 103-124 (LKAEENRSERRERRERPEHADG). Residues 125-141 (AEGDDSNDSDNSDNADE) are compositionally biased toward acidic residues.

This sequence belongs to the bacterial ribosomal protein bS6 family.

In terms of biological role, binds together with bS18 to 16S ribosomal RNA. This is Small ribosomal subunit protein bS6 from Pseudomonas entomophila (strain L48).